The sequence spans 417 residues: Tryptophan synthase beta chain (417 aa).

Lys111 bears the N6-(pyridoxal phosphate)lysine mark.

Belongs to the TrpB family. In terms of assembly, tetramer of two alpha and two beta chains. It depends on pyridoxal 5'-phosphate as a cofactor.

It catalyses the reaction (1S,2R)-1-C-(indol-3-yl)glycerol 3-phosphate + L-serine = D-glyceraldehyde 3-phosphate + L-tryptophan + H2O. It participates in amino-acid biosynthesis; L-tryptophan biosynthesis; L-tryptophan from chorismate: step 5/5. Functionally, the beta subunit is responsible for the synthesis of L-tryptophan from indole and L-serine. The chain is Tryptophan synthase beta chain from Fervidobacterium nodosum (strain ATCC 35602 / DSM 5306 / Rt17-B1).